A 146-amino-acid chain; its full sequence is MRVVLQRSKKASVAVDGEIVGQIPFGLTLLVGITHEDTEKDATYIAEKIANLRIFEDESGKMNHSVLDVEGQVLSISQFTLYGDCRKGRRPNFMDAAKPDYAERLYDFFNEEVRKQGLHVETGKFGAMMDVSLINDGPVTLIVESK.

The Gly-cisPro motif, important for rejection of L-amino acids motif lies at 137–138 (GP).

The protein belongs to the DTD family. Homodimer.

Its subcellular location is the cytoplasm. It carries out the reaction glycyl-tRNA(Ala) + H2O = tRNA(Ala) + glycine + H(+). The enzyme catalyses a D-aminoacyl-tRNA + H2O = a tRNA + a D-alpha-amino acid + H(+). An aminoacyl-tRNA editing enzyme that deacylates mischarged D-aminoacyl-tRNAs. Also deacylates mischarged glycyl-tRNA(Ala), protecting cells against glycine mischarging by AlaRS. Acts via tRNA-based rather than protein-based catalysis; rejects L-amino acids rather than detecting D-amino acids in the active site. By recycling D-aminoacyl-tRNA to D-amino acids and free tRNA molecules, this enzyme counteracts the toxicity associated with the formation of D-aminoacyl-tRNA entities in vivo and helps enforce protein L-homochirality. The protein is D-aminoacyl-tRNA deacylase of Bacillus cereus (strain B4264).